We begin with the raw amino-acid sequence, 263 residues long: Putative protein JayE (263 aa).

Belongs to the Mu gp47/PBSX XkdT family.

This Escherichia coli (strain K12) protein is Putative protein JayE (jayE).